The following is a 242-amino-acid chain: Outer membrane protein class 4 (242 aa).

The N-terminal stretch at 1–22 (MTKQLKLSALFVALLASGTAVA) is a signal peptide. 7 tandem repeats follow at residues 69–70 (AP), 71–72 (EP), 73–74 (EP), 75–76 (EP), 77–78 (EP), 79–80 (AP), and 81–82 (AP). The tract at residues 69 to 82 (APEPEPEPEPAPAP) is 7 X 2 AA tandem repeats of X-P. In terms of domain architecture, OmpA-like spans 92 to 229 (YVDETISLSA…RVDVKIRSIV (138 aa)). Cys191 and Cys214 are oxidised to a cystine.

It belongs to the outer membrane OOP (TC 1.B.6) superfamily. The C-terminus exists in a monomer-dimer equilibrium.

Its subcellular location is the cell outer membrane. This chain is Outer membrane protein class 4, found in Neisseria meningitidis serogroup B (strain ATCC BAA-335 / MC58).